Here is a 65-residue protein sequence, read N- to C-terminus: Large ribosomal subunit protein bL35 (65 aa).

This sequence belongs to the bacterial ribosomal protein bL35 family.

The sequence is that of Large ribosomal subunit protein bL35 from Chlorobium phaeovibrioides (strain DSM 265 / 1930) (Prosthecochloris vibrioformis (strain DSM 265)).